A 396-amino-acid polypeptide reads, in one-letter code: 1-deoxy-D-xylulose 5-phosphate reductoisomerase (396 aa).

T10, G11, S12, I13, N38, and N123 together coordinate NADPH. Position 124 (K124) interacts with 1-deoxy-D-xylulose 5-phosphate. Residue E125 coordinates NADPH. D149 contributes to the Mn(2+) binding site. 1-deoxy-D-xylulose 5-phosphate-binding residues include S150, E151, S185, and H208. E151 serves as a coordination point for Mn(2+). Residue G214 coordinates NADPH. Residues S221, N226, K227, and E230 each coordinate 1-deoxy-D-xylulose 5-phosphate. E230 is a binding site for Mn(2+).

Belongs to the DXR family. It depends on Mg(2+) as a cofactor. Mn(2+) is required as a cofactor.

It catalyses the reaction 2-C-methyl-D-erythritol 4-phosphate + NADP(+) = 1-deoxy-D-xylulose 5-phosphate + NADPH + H(+). It functions in the pathway isoprenoid biosynthesis; isopentenyl diphosphate biosynthesis via DXP pathway; isopentenyl diphosphate from 1-deoxy-D-xylulose 5-phosphate: step 1/6. Catalyzes the NADPH-dependent rearrangement and reduction of 1-deoxy-D-xylulose-5-phosphate (DXP) to 2-C-methyl-D-erythritol 4-phosphate (MEP). The protein is 1-deoxy-D-xylulose 5-phosphate reductoisomerase of Shewanella pealeana (strain ATCC 700345 / ANG-SQ1).